An 871-amino-acid polypeptide reads, in one-letter code: Probable inorganic carbon transporter subunit DabA (871 aa).

4 residues coordinate Zn(2+): Cys-396, Asp-398, His-577, and Cys-592.

It belongs to the inorganic carbon transporter (TC 9.A.2) DabA family. As to quaternary structure, forms a complex with DabB. Zn(2+) is required as a cofactor.

The protein localises to the cell membrane. Functionally, part of an energy-coupled inorganic carbon pump. The protein is Probable inorganic carbon transporter subunit DabA of Bacillus subtilis (strain 168).